A 570-amino-acid polypeptide reads, in one-letter code: MIPPEIRRSVLLQKAIKLALAGTLLTFASFSATAADPSSDTETPQPPDILLGPLFNDVQNAKLLPDQKTFADAIPNSDPLMILADYRMQRNQSGFDLRHFVDVNFTLPKAGEKYVPPAGQSLREHIDGLWPVLTRSTKNVKKWDSLLPLPESYVVPGGRFREIYYWDSYFTMLGLAESGHWDKVADMVANFGYEIDAWGHIPNGNRTYYLSRSQPPFFAFMVELLAQHEGDDALKEYLPQLQKEYAYWMEGVETLQPGQQNQRVVKLEDGSVLNRYWDDRDTPRPESWVEDIATAKSNPNRPATEIYRDLRSAAASGWDFSSRWMDNPQQLSTIRTTTIVPVDLNALLYQLEKTLARASAAAGDRAKASQYDALANARQKAIEMHLWNNKEGWYADYDLQNNKIRDQLTAAALFPLYVNAAAKDRAAKVAAAAQAHQLQPGGLATTSVKSGQQWDAPNGWAPLQWVAAEGLQNYGQDDVAMEVTWRFLTNVQHTYDREKKLVEKYDVSSTGTGGGGGEYPLQDGFGWTNGVTLKMLDLICPQEKPCDSVPSTRPASLSATPTKTPSAATQ.

A signal peptide spans 1-34; that stretch reads MIPPEIRRSVLLQKAIKLALAGTLLTFASFSATA. Substrate-binding positions include Arg159, 166 to 167, Asn203, 212 to 214, 284 to 286, and Gly317; these read WD, RSQ, and RPE. Residues Asp319 and Glu503 each act as proton donor/acceptor in the active site. Glu518 is a binding site for substrate. A disordered region spans residues 544-570; it reads KPCDSVPSTRPASLSATPTKTPSAATQ. Residues 554–570 are compositionally biased toward low complexity; it reads PASLSATPTKTPSAATQ.

It belongs to the glycosyl hydrolase 37 family. In terms of assembly, monomer.

The protein localises to the periplasm. The enzyme catalyses alpha,alpha-trehalose + H2O = alpha-D-glucose + beta-D-glucose. Functionally, provides the cells with the ability to utilize trehalose at high osmolarity by splitting it into glucose molecules that can subsequently be taken up by the phosphotransferase-mediated uptake system. In Salmonella choleraesuis (strain SC-B67), this protein is Periplasmic trehalase.